The sequence spans 115 residues: UPF0125 protein VP0646 (115 aa).

Residues 92–115 (RAEQAKAAGNADPVTGGKPNALRK) are disordered.

Belongs to the UPF0125 (RnfH) family.

The chain is UPF0125 protein VP0646 from Vibrio parahaemolyticus serotype O3:K6 (strain RIMD 2210633).